A 745-amino-acid polypeptide reads, in one-letter code: DEAD-box ATP-dependent RNA helicase 3A, chloroplastic (745 aa).

Residues 1–41 constitute a chloroplast transit peptide; it reads MASLVTLPAIAFSNPATASGAVRLRAAAFRCWALRRRGWAV. The short motif at 88–116 is the Q motif element; that stretch reads LAIARLGLPDELVATLEKRGITHLFPIQR. Residues 119–295 enclose the Helicase ATP-binding domain; that stretch reads LIPALGGRDL…RRYLNNPLTI (177 aa). Residue 132-139 participates in ATP binding; the sequence is AKTGTGKT. Residues 243–246 carry the DEAD box motif; sequence DEAD. In terms of domain architecture, Helicase C-terminal spans 324-469; that stretch reads ILSDLITVYA…ISPPSIEEVL (146 aa). Residues 606-724 form a disordered region; that stretch reads LTKISKLPAL…SLGGRESSRS (119 aa). Residues 641-650 are compositionally biased toward gly residues; that stretch reads GGGASRGRGG. Positions 656–670 are enriched in basic and acidic residues; that stretch reads EDRYRRGGRSLRSDN. Residues 687 to 724 show a composition bias toward low complexity; the sequence is RSSSSFGGRSSSYGSRGSPSPSFGVRSSSLGGRESSRS. The segment at 727–744 adopts a CCHC-type zinc-finger fold; the sequence is GACFNCGESGHRASDCPN.

Belongs to the DEAD box helicase family. DDX21/DDX50 subfamily.

It localises to the plastid. It is found in the chloroplast. The enzyme catalyses ATP + H2O = ADP + phosphate + H(+). Its function is as follows. Nuclear genome-encoded factor involved in ribosome biogenesis in chloroplasts. Binds specific group II introns in chloroplasts and facilitates their splicing. Required for normal development of chloroplasts. The chain is DEAD-box ATP-dependent RNA helicase 3A, chloroplastic from Zea mays (Maize).